Reading from the N-terminus, the 333-residue chain is Glycerol-3-phosphate dehydrogenase [NAD(P)+] (333 aa).

Residues Phe-19, Arg-40, Arg-41, and Lys-113 each contribute to the NADPH site. Residues Lys-113 and Gly-141 each contribute to the sn-glycerol 3-phosphate site. NADPH is bound at residue Ala-145. Positions 196, 249, 259, 260, and 261 each coordinate sn-glycerol 3-phosphate. Lys-196 serves as the catalytic Proton acceptor. NADPH is bound at residue Arg-260. NADPH contacts are provided by Val-282 and Glu-283.

This sequence belongs to the NAD-dependent glycerol-3-phosphate dehydrogenase family.

The protein localises to the cytoplasm. It catalyses the reaction sn-glycerol 3-phosphate + NAD(+) = dihydroxyacetone phosphate + NADH + H(+). The catalysed reaction is sn-glycerol 3-phosphate + NADP(+) = dihydroxyacetone phosphate + NADPH + H(+). It functions in the pathway membrane lipid metabolism; glycerophospholipid metabolism. Its function is as follows. Catalyzes the reduction of the glycolytic intermediate dihydroxyacetone phosphate (DHAP) to sn-glycerol 3-phosphate (G3P), the key precursor for phospholipid synthesis. The chain is Glycerol-3-phosphate dehydrogenase [NAD(P)+] from Sinorhizobium fredii (strain NBRC 101917 / NGR234).